The sequence spans 149 residues: Large ribosomal subunit protein uL13 (149 aa).

The protein belongs to the universal ribosomal protein uL13 family. Part of the 50S ribosomal subunit.

In terms of biological role, this protein is one of the early assembly proteins of the 50S ribosomal subunit, although it is not seen to bind rRNA by itself. It is important during the early stages of 50S assembly. The polypeptide is Large ribosomal subunit protein uL13 (Chlorobium luteolum (strain DSM 273 / BCRC 81028 / 2530) (Pelodictyon luteolum)).